The following is a 162-amino-acid chain: Large ribosomal subunit protein uL22c (162 aa).

This sequence belongs to the universal ribosomal protein uL22 family. In terms of assembly, part of the 50S ribosomal subunit.

It localises to the plastid. It is found in the chloroplast. In terms of biological role, this protein binds specifically to 23S rRNA. The globular domain of the protein is located near the polypeptide exit tunnel on the outside of the subunit, while an extended beta-hairpin is found that lines the wall of the exit tunnel in the center of the 70S ribosome. The protein is Large ribosomal subunit protein uL22c (rpl22) of Cucumis sativus (Cucumber).